Here is a 418-residue protein sequence, read N- to C-terminus: Zinc finger protein 566 (418 aa).

The KRAB domain maps to 6–77; the sequence is VMFSDVSVDF…DRELTRGQWP (72 aa). A C2H2-type 1; degenerate zinc finger spans residues 169–193; the sequence is KFCASKEYRKTFRHGSQFATHEIIH. 7 C2H2-type zinc fingers span residues 199-221, 227-249, 255-277, 283-305, 311-333, 339-361, and 367-389; these read YECKECGKSFRHPSRLTHHQKIH, FECKECGKTFICGSDLTRHHRIH, YECKECGKAFSSGSNFTRHQRIH, YECKECGKAFSSGSNFTQHQRIH, YECKECGNAFSQSSQLIKHQRIH, YECKECEKAFRSGSDLTRHQRIH, and YECKICGKAYSQSSQLISHHRIH. Glycyl lysine isopeptide (Lys-Gly) (interchain with G-Cter in SUMO2) cross-links involve residues K314 and K328.

Belongs to the krueppel C2H2-type zinc-finger protein family.

The protein resides in the nucleus. May be involved in transcriptional regulation. This chain is Zinc finger protein 566 (ZNF566), found in Pan troglodytes (Chimpanzee).